Consider the following 287-residue polypeptide: Elongation factor Ts (287 aa).

The segment at 80-83 is involved in Mg(2+) ion dislocation from EF-Tu; the sequence is TDFL.

This sequence belongs to the EF-Ts family.

The protein localises to the cytoplasm. Functionally, associates with the EF-Tu.GDP complex and induces the exchange of GDP to GTP. It remains bound to the aminoacyl-tRNA.EF-Tu.GTP complex up to the GTP hydrolysis stage on the ribosome. The sequence is that of Elongation factor Ts from Stutzerimonas stutzeri (strain A1501) (Pseudomonas stutzeri).